We begin with the raw amino-acid sequence, 254 residues long: HTH-type transcriptional regulator GolR (254 aa).

In terms of domain architecture, HTH deoR-type spans 3–58 (PFERQNKIIHLLDQNNKITVPELSRILDVSISTIRNDLSALEESGMIKKVHGGAVL). Residues 20–39 (ITVPELSRILDVSISTIRND) constitute a DNA-binding region (H-T-H motif).

In terms of biological role, involved in the glycerol metabolism. Repressor of the gol operon for glycerol metabolism. The polypeptide is HTH-type transcriptional regulator GolR (Listeria innocua serovar 6a (strain ATCC BAA-680 / CLIP 11262)).